A 1280-amino-acid polypeptide reads, in one-letter code: Pullulanase A (1280 aa).

A signal peptide spans 1-44; sequence MRKTPSHTEKKMVYSIRSLKNGTGSVLIGASLVLLAMATPTISS. A disordered region spans residues 42–132; that stretch reads ISSDESTPTT…VTTETKAEEP (91 aa). Low complexity predominate over residues 48-61; that stretch reads TPTTNEPNNRNTTT. Residues 79-90 are compositionally biased toward polar residues; that stretch reads DISSPGNANASL. The span at 115 to 126 shows a compositional bias: low complexity; the sequence is EPTTSTSPVTTE. Substrate-binding positions include 156–158, W168, D214, 263–265, W276, K318, and N323; these read WTW and WYW. Ca(2+) is bound by residues S661 and Y663. Residues 667-668 and F743 contribute to the substrate site; that span reads YD. Residue D778 is the Nucleophile of the active site. E807 functions as the Proton donor in the catalytic mechanism. A substrate-binding site is contributed by W809. Residues M828, T831, and D832 each coordinate Ca(2+). Substrate is bound by residues D839, R842, and Y849. The Ca(2+) site is built by D882 and D886. Residues N896, K969, and 989–991 each bind substrate; that span reads DSY. D992 provides a ligand contact to Ca(2+). A disordered region spans residues 1140-1248; sequence VSQNGTSHES…TPDKQAELPN (109 aa). A compositionally biased stretch (basic and acidic residues) spans 1149-1196; that stretch reads STAEEKPDSTPSKPEHQNEASHPAHQDPAPEARPDSTKPDAKVADAEN. Low complexity predominate over residues 1205–1218; that stretch reads SQAEQPAQEAQASS. The LPXTG sorting signal motif lies at 1246-1250; that stretch reads LPNTG. T1249 bears the Pentaglycyl murein peptidoglycan amidated threonine mark. The propeptide at 1250–1280 is removed by sortase; that stretch reads GIKNENKLLFAGISLLALLGLGFLLKNKKEN.

It belongs to the glycosyl hydrolase 13 family.

The protein localises to the secreted. It localises to the cell wall. It is found in the cell surface. It carries out the reaction Hydrolysis of (1-&gt;6)-alpha-D-glucosidic linkages in pullulan, amylopectin and glycogen, and in the alpha- and beta-limit dextrins of amylopectin and glycogen.. Inhibited by 4-O-alpha-D-glucopyranosylmoranoline (G1M). Virulence factor. Involved in the degradation of glycogen of the mammalian host cells. Hydrolyzes the alpha-1,6-branchpoints of glycogen. Hydrolyzes pullulan. Does not hydrolyze dextran. Binds to mouse lung alveolar type II cells that are rich in glycogen stores. Is an alpha-glucan-specific carbohydrate-binding protein, which binds to amylose (pure alpha-(1,4)-linked glucose), amylopectin (alpha-(1,4)-linked glucose with alpha-(1,6) branch points), pullulan (linear polymer of mixed alpha-(1,4)- and alpha-(1,6)-linked glucose) and glycogen (similar to amylopectin with more frequent alpha-(1,6) branch points) in vitro. Does not bind to dextran (a linear polymer of alpha-(1,6)-linked glucose). The polypeptide is Pullulanase A (Streptococcus pneumoniae serotype 4 (strain ATCC BAA-334 / TIGR4)).